Here is a 254-residue protein sequence, read N- to C-terminus: tRNA uridine(34) hydroxylase (254 aa).

The 95-residue stretch at glutamine 123–serine 217 folds into the Rhodanese domain. Catalysis depends on cysteine 177, which acts as the Cysteine persulfide intermediate.

It belongs to the TrhO family.

It catalyses the reaction uridine(34) in tRNA + AH2 + O2 = 5-hydroxyuridine(34) in tRNA + A + H2O. Catalyzes oxygen-dependent 5-hydroxyuridine (ho5U) modification at position 34 in tRNAs. This is tRNA uridine(34) hydroxylase from Legionella pneumophila (strain Lens).